Here is a 347-residue protein sequence, read N- to C-terminus: GMP reductase (347 aa).

108–131 (ADFEKTVQILALDPALNFVCIDVA) provides a ligand contact to NADP(+). K(+) contacts are provided by G181 and G183. C186 (thioimidate intermediate) is an active-site residue. 216-239 (IVSDGGCTMPGDVAKAFGGGADFV) contributes to the NADP(+) binding site.

This sequence belongs to the IMPDH/GMPR family. GuaC type 1 subfamily. As to quaternary structure, homotetramer.

It carries out the reaction IMP + NH4(+) + NADP(+) = GMP + NADPH + 2 H(+). Its function is as follows. Catalyzes the irreversible NADPH-dependent deamination of GMP to IMP. It functions in the conversion of nucleobase, nucleoside and nucleotide derivatives of G to A nucleotides, and in maintaining the intracellular balance of A and G nucleotides. The protein is GMP reductase of Salmonella paratyphi B (strain ATCC BAA-1250 / SPB7).